A 310-amino-acid polypeptide reads, in one-letter code: Tagatose-6-phosphate kinase (310 aa).

Belongs to the carbohydrate kinase PfkB family. LacC subfamily.

The catalysed reaction is D-tagatofuranose 6-phosphate + ATP = D-tagatofuranose 1,6-bisphosphate + ADP + H(+). It functions in the pathway carbohydrate metabolism; D-tagatose 6-phosphate degradation; D-glyceraldehyde 3-phosphate and glycerone phosphate from D-tagatose 6-phosphate: step 1/2. The polypeptide is Tagatose-6-phosphate kinase (Streptococcus mutans serotype c (strain ATCC 700610 / UA159)).